A 101-amino-acid polypeptide reads, in one-letter code: Co-chaperonin GroES (101 aa).

Belongs to the GroES chaperonin family. As to quaternary structure, heptamer of 7 subunits arranged in a ring. Interacts with the chaperonin GroEL.

Its subcellular location is the cytoplasm. Functionally, together with the chaperonin GroEL, plays an essential role in assisting protein folding. The GroEL-GroES system forms a nano-cage that allows encapsulation of the non-native substrate proteins and provides a physical environment optimized to promote and accelerate protein folding. GroES binds to the apical surface of the GroEL ring, thereby capping the opening of the GroEL channel. This Lawsonia intracellularis protein is Co-chaperonin GroES.